The chain runs to 98 residues: Feather keratin 3 (98 aa).

The protein belongs to the avian keratin family. In terms of assembly, the avian keratins (F-ker, S-ker, C-ker and B-ker) are a complex mixture of very similar polypeptides.

The polypeptide is Feather keratin 3 (Gallus gallus (Chicken)).